A 2731-amino-acid polypeptide reads, in one-letter code: Teneurin-1 (2731 aa).

A disordered region spans residues 1 to 72 (MEQTDCKPYQ…KRKDVEKSTQ (72 aa)). The Teneurin N-terminal domain occupies 1-318 (MEQTDCKPYQ…KPYRCCNWKC (318 aa)). The Cytoplasmic portion of the chain corresponds to 1 to 324 (MEQTDCKPYQ…NWKCTALSAT (324 aa)). Basic and acidic residues predominate over residues 44-55 (ETLHEYNQELRR). The Nuclear localization signal (NLS) signature appears at 62 to 65 (RKRK). Ser-105 bears the Phosphoserine mark. Thr-109 carries the phosphothreonine modification. The residue at position 116 (Ser-116) is a Phosphoserine. Positions 175–241 (DSAQDMQSSP…PAPPTSTQDS (67 aa)) are disordered. Over residues 178–189 (QDMQSSPHNQFT) the composition is skewed to polar residues. A compositionally biased stretch (pro residues) spans 192–201 (PLPPPPPPPH). The span at 214–224 (DSLQRRSMTTR) shows a compositional bias: polar residues. Residues 290 to 297 (PPPRPLPR) carry the Required for interaction with SORBS1 (Ten-1 ICD form) motif. The chain crosses the membrane as a helical span at residues 325-345 (AITVTLALLLAYVIAVHLFGL). Over 346-2731 (TWQLQPVGQI…FMRQSEIGRR (2386 aa)) the chain is Extracellular. An N-linked (GlcNAc...) asparagine glycan is attached at Asn-432. 8 EGF-like domains span residues 527 to 558 (IMDDCSTNCNGNGECISGHCHCFPGFLGPDCA), 559 to 590 (RDSCPVLCGGNGEYEKGHCVCRNGWKGPECDV), 591 to 623 (PEEQCIDPTCFGHGTCIMGVCICVPGYKGEICE), 624 to 656 (EEDCLDPMCSSHGICVKGECHCSTGWGGVNCET), 657 to 690 (PLPICQEQCSGHGTFLLDTGVCSCDPKWTGSDCS), 691 to 720 (TELCTMECGSHGVCSRGICQCEEGWVGPTC), 721 to 752 (EERSCHSHCAEHGQCKDGKCECSPGWEGDHCT), and 760 to 795 (VRDGCPGLCFGNGRCTLDQNGWHCVCQVGWSGTGCN). Disulfide bonds link Cys-531–Cys-541, Cys-535–Cys-546, Cys-548–Cys-557, Cys-566–Cys-577, Cys-579–Cys-588, Cys-595–Cys-606, Cys-600–Cys-611, Cys-613–Cys-622, Cys-627–Cys-638, Cys-632–Cys-643, Cys-645–Cys-654, Cys-665–Cys-678, Cys-680–Cys-689, Cys-694–Cys-704, Cys-698–Cys-709, Cys-711–Cys-720, Cys-725–Cys-735, Cys-729–Cys-740, Cys-742–Cys-751, Cys-764–Cys-774, Cys-768–Cys-783, and Cys-785–Cys-794. N-linked (GlcNAc...) asparagine glycosylation is found at Asn-904 and Asn-1083. NHL repeat units lie at residues 1193–1218 (LFAPVALASGPDGSVYVGDFNFVRRI), 1298–1342 (SHCG…NAVI), 1357–1408 (LSCD…IAGR), 1420–1464 (FLVS…VTTN), and 1487–1530 (CFSG…ISKN). The stretch at 1540–1559 (YEIASPADQELYQFTVNGTH) is one YD 1 repeat. Residues Asn-1556 and Asn-1573 are each glycosylated (N-linked (GlcNAc...) asparagine). YD repeat units follow at residues 1576–1596 (YNAEGDLGAITSSNGNSVHIR), 1614–1638 (YWLTISSNGVLKRVSAQGYNLALMT), 1639–1660 (YPGNTGLLATKSNENGWTTVYE), and 1661–1681 (YDPEGHLTNATFPTGEVSSFH). 6 N-linked (GlcNAc...) asparagine glycosylation sites follow: Asn-1669, Asn-1705, Asn-1743, Asn-1763, Asn-1787, and Asn-1848. YD repeat units follow at residues 1851–1870 (YSPSGLVTFIQRGTWNEKME), 1871–1891 (YDQSGKIISRTWADGKIWSYT), 1892–1910 (YLEKSVMLLLHSQRRYIFE), 1911–1931 (YDQSDCLLSVTMPSMVRHSLQ), 1939–1955 (YRNIYTPPDSSTSFIQD), 1956–1975 (YSRDGRLLQTLHLGTGRRVL), 1976–1995 (YKYTKQARLSEILYDTTQVT), 1998–2018 (YEESSGVIKTIHLMHDGFICT), 2021–2041 (YRQTGPLIGRQIFRFSEEGLV), 2091–2111 (YDLNQVITTTVMKHTKIFNAN), and 2119–2139 (YEILKAIAYWMTIQYDNMGRM). A glycan (N-linked (GlcNAc...) asparagine) is linked at Asn-2151. YD repeat units lie at residues 2159–2179 (YDADGQLQTVSVNDKIQWRYS), 2180–2200 (YDLNGNINLLSHGNSARLTPL), 2202–2222 (YDLRDRITRLGEIQYKMDEDG), 2234–2254 (YNSNGLLQKAYNKVSGWTVQY), and 2256–2276 (YDGLGRRVASKSSLGQHLQFF). Asn-2291 is a glycosylation site (N-linked (GlcNAc...) asparagine). YD repeat units follow at residues 2302–2319 (YDLQGHLIAMELSSGEEY) and 2320–2343 (YVACDNMGTPLAVFSSRGQVIKEI). Ser-2586 carries the post-translational modification Phosphoserine. Asn-2608 carries N-linked (GlcNAc...) asparagine glycosylation.

Belongs to the tenascin family. Teneurin subfamily. As to quaternary structure, homodimer; disulfide-linked. Heterodimer with either TENM2 or TENM3. May also form heterodimer with TENM4. Ten-1 ICD interacts with SORBS1 (via third SH3 domain). Interacts with MBD1 isoform 2. Ten-1 ICD interacts with HINT1. Once secreted, may also be cleaved to give rise to the TCAP-1 form. Post-translationally, derives from the plasma membrane form by proteolytic processing. Further proteolytic cleavage may generate 11.9 and 4.7 kDa bioactive peptides. Isoform 1 and isoform 2 are expressed in the brain. Isoform 2 is expressed in the granular layer of the dentate gyrus and the pyramidal layer (Py) of the CA1, CA2 and CA3 of the hippocampus (at protein level). Expressed in the cortex, thalamus, CA1, CA2, CA3, dentate gyrus and granular layer of the hippocampus. Weakly expressed in kidney, testis and lung.

Its subcellular location is the cell membrane. It localises to the cytoplasm. The protein resides in the secreted. It is found in the nucleus. The protein localises to the nucleus speckle. Its subcellular location is the nucleus matrix. It localises to the cytoskeleton. In terms of biological role, involved in neural development, regulating the establishment of proper connectivity within the nervous system. May function as a cellular signal transducer. Functionally, plays a role in the regulation of neuroplasticity in the limbic system. Mediates a rapid reorganization of actin- and tubulin-based cytoskeleton elements with an increase in dendritic arborization and spine density formation of neurons in the hippocampus and amygdala. Induces BDNF transcription inhibition in neurons. Activates the mitogen-activated protein (MAP) kinase 2 (MEK2) and extracellular signal-regulated kinase (ERK) cascade. Also acts as a bioactive neuroprotective peptide on limbic neurons of the brain and regulates stress-induced behavior: attenuates alkalosis-associated necrotic cell death and the effects of corticotropin-releasing factor (CRF) on c-fos/FOS induction and on the reinstatement of cocaine seeking. Its function is as follows. Induces gene transcription activation. The protein is Teneurin-1 (Tenm1) of Mus musculus (Mouse).